A 504-amino-acid polypeptide reads, in one-letter code: Splicing factor SF3a60 homolog (504 aa).

Ser-2 carries the N-acetylserine modification. Disordered stretches follow at residues Asp-293–Ala-319 and Tyr-355–Asp-374. Residues Glu-356–Asp-374 show a composition bias toward acidic residues. The residue at position 373 (Ser-373) is a Phosphoserine. The Matrin-type zinc finger occupies Phe-409–Cys-440.

It belongs to the SF3A3 family. Expressed at moderate levels in all sporophytic tissues with strongest expression in gametophytes.

Its subcellular location is the nucleus. In terms of biological role, splicing factor homolog to SF3a60 that may be involved in pre-spliceosome formation. Is necessary for gametic cell fate determination. In Arabidopsis thaliana (Mouse-ear cress), this protein is Splicing factor SF3a60 homolog.